The sequence spans 200 residues: dTTP/UTP pyrophosphatase (200 aa).

Asp81 functions as the Proton acceptor in the catalytic mechanism.

Belongs to the Maf family. YhdE subfamily. A divalent metal cation is required as a cofactor.

Its subcellular location is the cytoplasm. It catalyses the reaction dTTP + H2O = dTMP + diphosphate + H(+). The catalysed reaction is UTP + H2O = UMP + diphosphate + H(+). Functionally, nucleoside triphosphate pyrophosphatase that hydrolyzes dTTP and UTP. May have a dual role in cell division arrest and in preventing the incorporation of modified nucleotides into cellular nucleic acids. In Cupriavidus metallidurans (strain ATCC 43123 / DSM 2839 / NBRC 102507 / CH34) (Ralstonia metallidurans), this protein is dTTP/UTP pyrophosphatase.